We begin with the raw amino-acid sequence, 265 residues long: Cytochrome c oxidase subunit 3 (265 aa).

The next 7 helical transmembrane spans lie at Pro-16–Met-36, Gly-41–Trp-61, Gly-85–Phe-105, Leu-138–Leu-158, Ala-162–Ile-182, Phe-200–Ile-220, and Ala-242–Trp-262.

It belongs to the cytochrome c oxidase subunit 3 family. In terms of assembly, component of the cytochrome c oxidase (complex IV, CIV), a multisubunit enzyme composed of a catalytic core of 3 subunits and several supernumerary subunits. The complex exists as a monomer or a dimer and forms supercomplexes (SCs) in the inner mitochondrial membrane with ubiquinol-cytochrome c oxidoreductase (cytochrome b-c1 complex, complex III, CIII).

The protein resides in the mitochondrion inner membrane. It carries out the reaction 4 Fe(II)-[cytochrome c] + O2 + 8 H(+)(in) = 4 Fe(III)-[cytochrome c] + 2 H2O + 4 H(+)(out). Component of the cytochrome c oxidase, the last enzyme in the mitochondrial electron transport chain which drives oxidative phosphorylation. The respiratory chain contains 3 multisubunit complexes succinate dehydrogenase (complex II, CII), ubiquinol-cytochrome c oxidoreductase (cytochrome b-c1 complex, complex III, CIII) and cytochrome c oxidase (complex IV, CIV), that cooperate to transfer electrons derived from NADH and succinate to molecular oxygen, creating an electrochemical gradient over the inner membrane that drives transmembrane transport and the ATP synthase. Cytochrome c oxidase is the component of the respiratory chain that catalyzes the reduction of oxygen to water. Electrons originating from reduced cytochrome c in the intermembrane space (IMS) are transferred via the dinuclear copper A center (CU(A)) of subunit 2 and heme A of subunit 1 to the active site in subunit 1, a binuclear center (BNC) formed by heme A3 and copper B (CU(B)). The BNC reduces molecular oxygen to 2 water molecules using 4 electrons from cytochrome c in the IMS and 4 protons from the mitochondrial matrix. This is Cytochrome c oxidase subunit 3 (COX3) from Marchantia polymorpha (Common liverwort).